A 201-amino-acid chain; its full sequence is Protein CIMAP1C (201 aa).

Residues 171-186 (PAPTMSSRSGHTSPAR) form an STPGR repeat. Positions 172-201 (APTMSSRSGHTSPARLLSPWASSTRPTYAR) are disordered. Positions 191–201 (WASSTRPTYAR) are enriched in polar residues.

It belongs to the CIMAP family.

The sequence is that of Protein CIMAP1C (CIMAP1C) from Bos taurus (Bovine).